Here is a 300-residue protein sequence, read N- to C-terminus: 33 kDa chaperonin (300 aa).

Disulfide bonds link C240/C242 and C273/C276.

Belongs to the HSP33 family. Post-translationally, under oxidizing conditions two disulfide bonds are formed involving the reactive cysteines. Under reducing conditions zinc is bound to the reactive cysteines and the protein is inactive.

It localises to the cytoplasm. Functionally, redox regulated molecular chaperone. Protects both thermally unfolding and oxidatively damaged proteins from irreversible aggregation. Plays an important role in the bacterial defense system toward oxidative stress. The chain is 33 kDa chaperonin from Cyanothece sp. (strain PCC 7425 / ATCC 29141).